The chain runs to 393 residues: Cysteine protease ATG4B (393 aa).

The active-site Nucleophile is the Cys73. Catalysis depends on residues Asp278 and His280. The LIR motif lies at 388–391; the sequence is FEIL.

The protein belongs to the peptidase C54 family.

It is found in the cytoplasm. The protein localises to the cytosol. The protein resides in the cytoplasmic vesicle. It localises to the autophagosome. Its subcellular location is the endoplasmic reticulum. It is found in the mitochondrion. It carries out the reaction [protein]-C-terminal L-amino acid-glycyl-phosphatidylethanolamide + H2O = [protein]-C-terminal L-amino acid-glycine + a 1,2-diacyl-sn-glycero-3-phosphoethanolamine. The enzyme catalyses [protein]-C-terminal L-amino acid-glycyl-phosphatidylserine + H2O = [protein]-C-terminal L-amino acid-glycine + a 1,2-diacyl-sn-glycero-3-phospho-L-serine. In terms of biological role, cysteine protease that plays a key role in autophagy by mediating both proteolytic activation and delipidation of ATG8 family proteins. Required for canonical autophagy (macroautophagy), non-canonical autophagy as well as for mitophagy. The protease activity is required for proteolytic activation of ATG8 family proteins: cleaves the C-terminal amino acid of ATG8 proteins to reveal a C-terminal glycine. Exposure of the glycine at the C-terminus is essential for ATG8 proteins conjugation to phosphatidylethanolamine (PE) and insertion to membranes, which is necessary for autophagy. Protease activity is also required to counteract formation of high-molecular weight conjugates of ATG8 proteins (ATG8ylation): acts as a deubiquitinating-like enzyme that removes ATG8 conjugated to other proteins, such as ATG3. In addition to the protease activity, also mediates delipidation of ATG8 family proteins. Catalyzes delipidation of PE-conjugated forms of ATG8 proteins during macroautophagy. Also involved in non-canonical autophagy, a parallel pathway involving conjugation of ATG8 proteins to single membranes at endolysosomal compartments, by catalyzing delipidation of ATG8 proteins conjugated to phosphatidylserine (PS). The protein is Cysteine protease ATG4B of Gallus gallus (Chicken).